Here is an 87-residue protein sequence, read N- to C-terminus: MSQAEFDKAAEEVKNLKTKPADDEMLFIYSHYKQATVGDINTERPGMLDFKGKAKWDAWNQLKGTSKEDAMKSYIDKVEELKKKYGI.

Serine 2 carries the N-acetylserine modification. The 86-residue stretch at 2-87 (SQAEFDKAAE…VEELKKKYGI (86 aa)) folds into the ACB domain. N6-acetyllysine; alternate is present on lysine 8. At lysine 8 the chain carries N6-succinyllysine; alternate. Position 14 (lysine 14) interacts with an acyl-CoA. The residue at position 17 (lysine 17) is an N6-succinyllysine. Position 19 is an N6-acetyllysine (lysine 19). Tyrosine 29 carries the post-translational modification Phosphotyrosine. An acyl-CoA contacts are provided by residues 29-33 (YSHYK), lysine 51, lysine 55, and tyrosine 74. Residue lysine 51 is modified to N6-acetyllysine. Lysine 55 carries the post-translational modification N6-acetyllysine; alternate. The residue at position 55 (lysine 55) is an N6-succinyllysine; alternate. The residue at position 55 (lysine 55) is an N6-(2-hydroxyisobutyryl)lysine; alternate. Position 55 is an N6-malonyllysine; alternate (lysine 55). An N6-acetyllysine; alternate modification is found at lysine 77. Position 77 is an N6-succinyllysine; alternate (lysine 77).

This sequence belongs to the ACBP family. As to quaternary structure, monomer.

It localises to the endoplasmic reticulum. It is found in the golgi apparatus. Functionally, binds medium- and long-chain acyl-CoA esters with very high affinity and may function as an intracellular carrier of acyl-CoA esters. The sequence is that of Acyl-CoA-binding protein (DBI) from Chaetophractus villosus (South American armadillo).